Consider the following 205-residue polypeptide: Small ribosomal subunit protein uS4 (205 aa).

The segment at 20–46 is disordered; sequence WGRSKSPVNRREYGPGQHGQRRKGKLS. Positions 94–157 constitute an S4 RNA-binding domain; it reads RRLDAVVYRA…RQLTLVLEAS (64 aa).

Belongs to the universal ribosomal protein uS4 family. As to quaternary structure, part of the 30S ribosomal subunit. Contacts protein S5. The interaction surface between S4 and S5 is involved in control of translational fidelity.

One of the primary rRNA binding proteins, it binds directly to 16S rRNA where it nucleates assembly of the body of the 30S subunit. In terms of biological role, with S5 and S12 plays an important role in translational accuracy. The sequence is that of Small ribosomal subunit protein uS4 from Beijerinckia indica subsp. indica (strain ATCC 9039 / DSM 1715 / NCIMB 8712).